Here is an 838-residue protein sequence, read N- to C-terminus: Polyribonucleotide nucleotidyltransferase (838 aa).

Positions 494 and 500 each coordinate Mg(2+). Positions 561-620 constitute a KH domain; it reads PRMESMLIDKGKIKNVIGAGGKNVREICEKTGAKIEISQDGTVMIYAVGREAIESAKDMI. The 68-residue stretch at 630 to 697 folds into the S1 motif domain; sequence GKIYSGEVCE…DKDHIQLSMR (68 aa). Gly residues predominate over residues 747 to 757; that stretch reads GGASAGRNGRG. The disordered stretch occupies residues 747–838; it reads GGASAGRNGR…PAAPKKPRFF (92 aa). Low complexity predominate over residues 788–810; the sequence is AGSSGYSSDSSSGNTKSSSSESS. The segment covering 811–820 has biased composition (gly residues); that stretch reads GGTGGRGRNG.

The protein belongs to the polyribonucleotide nucleotidyltransferase family. It depends on Mg(2+) as a cofactor.

It localises to the cytoplasm. The catalysed reaction is RNA(n+1) + phosphate = RNA(n) + a ribonucleoside 5'-diphosphate. In terms of biological role, involved in mRNA degradation. Catalyzes the phosphorolysis of single-stranded polyribonucleotides processively in the 3'- to 5'-direction. The protein is Polyribonucleotide nucleotidyltransferase of Anaplasma phagocytophilum (strain HZ).